Here is a 37-residue protein sequence, read N- to C-terminus: NAD-reducing hydrogenase HoxS subunit alpha (37 aa).

This sequence belongs to the complex I 51 kDa subunit family. As to quaternary structure, tetramer of an alpha and a gamma subunits (flavin-containing dimer), and a delta and a nickel-containing beta subunits (hydrogenase dimer). FMN serves as cofactor. It depends on [4Fe-4S] cluster as a cofactor.

It localises to the cytoplasm. It catalyses the reaction H2 + NAD(+) = NADH + H(+). Functionally, subunits alpha and gamma of HoxS constitute an NADH--oxidoreductase. The polypeptide is NAD-reducing hydrogenase HoxS subunit alpha (hoxF) (Rhodococcus opacus (Nocardia opaca)).